Consider the following 101-residue polypeptide: Protein Tat (101 aa).

The interval 1–24 (MEPVDPNLEPWKHPGSQPRTACNN) is interaction with human CREBBP. The segment at 1–48 (MEPVDPNLEPWKHPGSQPRTACNNCYCKKCCFHCQVCFTKKGLGISYG) is transactivation. The Zn(2+) site is built by Cys-22, Cys-25, and Cys-27. A cysteine-rich region spans residues 22 to 37 (CNNCYCKKCCFHCQVC). At Lys-28 the chain carries N6-acetyllysine; by host PCAF. Residues Cys-30, His-33, Cys-34, and Cys-37 each coordinate Zn(2+). The segment at 38-48 (FTKKGLGISYG) is core. Residues 47-101 (YGRKKRRQRRRPPQDSQTHQSSLSKQPTSQLRGDPTGPTESKKKVERETETDPVH) form a disordered region. Over residues 48-57 (GRKKRRQRRR) the composition is skewed to basic residues. A Nuclear localization signal, RNA-binding (TAR), and protein transduction motif is present at residues 49–57 (RKKRRQRRR). The interval 49–86 (RKKRRQRRRPPQDSQTHQSSLSKQPTSQLRGDPTGPTE) is interaction with the host capping enzyme RNGTT. Residues Lys-50 and Lys-51 each carry the N6-acetyllysine; by host EP300 and GCN5L2 modification. Asymmetric dimethylarginine; by host PRMT6 occurs at positions 52 and 53. A compositionally biased stretch (polar residues) spans 61–77 (DSQTHQSSLSKQPTSQL). Lys-71 participates in a covalent cross-link: Glycyl lysine isopeptide (Lys-Gly) (interchain with G-Cter in ubiquitin). A Cell attachment site motif is present at residues 78–80 (RGD). Over residues 86–101 (ESKKKVERETETDPVH) the composition is skewed to basic and acidic residues.

The protein belongs to the lentiviruses Tat family. As to quaternary structure, interacts with host CCNT1. Associates with the P-TEFb complex composed at least of Tat, P-TEFb (CDK9 and CCNT1), TAR RNA, RNA Pol II. Recruits the HATs CREBBP, TAF1/TFIID, EP300, PCAF and GCN5L2. Interacts with host KAT5/Tip60; this interaction targets the latter to degradation. Interacts with the host deacetylase SIRT1. Interacts with host capping enzyme RNGTT; this interaction stimulates RNGTT. Binds to host KDR, and to the host integrins ITGAV/ITGB3 and ITGA5/ITGB1. Interacts with host KPNB1/importin beta-1 without previous binding to KPNA1/importin alpha-1. Interacts with EIF2AK2. Interacts with host nucleosome assembly protein NAP1L1; this interaction may be required for the transport of Tat within the nucleus, since the two proteins interact at the nuclear rim. Interacts with host C1QBP/SF2P32; this interaction involves lysine-acetylated Tat. Interacts with the host chemokine receptors CCR2, CCR3 and CXCR4. Interacts with host DPP4/CD26; this interaction may trigger an anti-proliferative effect. Interacts with host LDLR. Interacts with the host extracellular matrix metalloproteinase MMP1. Interacts with host PRMT6; this interaction mediates Tat's methylation. Interacts with, and is ubiquitinated by MDM2/Hdm2. Interacts with host PSMC3 and HTATIP2. Interacts with STAB1; this interaction may overcome SATB1-mediated repression of IL2 and IL2RA (interleukin) in T cells by binding to the same domain than HDAC1. Interacts (when acetylated) with human CDK13, thereby increasing HIV-1 mRNA splicing and promoting the production of the doubly spliced HIV-1 protein Nef. Interacts with host TBP; this interaction modulates the activity of transcriptional pre-initiation complex. Interacts with host RELA. Interacts with host PLSCR1; this interaction negatively regulates Tat transactivation activity by altering its subcellular distribution. In terms of processing, asymmetrical arginine methylation by host PRMT6 seems to diminish the transactivation capacity of Tat and affects the interaction with host CCNT1. Acetylation by EP300, CREBBP, GCN5L2/GCN5 and PCAF regulates the transactivation activity of Tat. EP300-mediated acetylation of Lys-50 promotes dissociation of Tat from the TAR RNA through the competitive binding to PCAF's bromodomain. In addition, the non-acetylated Tat's N-terminus can also interact with PCAF. PCAF-mediated acetylation of Lys-28 enhances Tat's binding to CCNT1. Lys-50 is deacetylated by SIRT1. Post-translationally, polyubiquitination by host MDM2 does not target Tat to degradation, but activates its transactivation function and fosters interaction with CCNT1 and TAR RNA. In terms of processing, phosphorylated by EIF2AK2 on serine and threonine residues adjacent to the basic region important for TAR RNA binding and function. Phosphorylation of Tat by EIF2AK2 is dependent on the prior activation of EIF2AK2 by dsRNA.

The protein localises to the host nucleus. It is found in the host nucleolus. Its subcellular location is the host cytoplasm. It localises to the secreted. In terms of biological role, transcriptional activator that increases RNA Pol II processivity, thereby increasing the level of full-length viral transcripts. Recognizes a hairpin structure at the 5'-LTR of the nascent viral mRNAs referred to as the transactivation responsive RNA element (TAR) and recruits the cyclin T1-CDK9 complex (P-TEFb complex) that will in turn hyperphosphorylate the RNA polymerase II to allow efficient elongation. The CDK9 component of P-TEFb and other Tat-activated kinases hyperphosphorylate the C-terminus of RNA Pol II that becomes stabilized and much more processive. Other factors such as HTATSF1/Tat-SF1, SUPT5H/SPT5, and HTATIP2 are also important for Tat's function. Besides its effect on RNA Pol II processivity, Tat induces chromatin remodeling of proviral genes by recruiting the histone acetyltransferases (HATs) CREBBP, EP300 and PCAF to the chromatin. This also contributes to the increase in proviral transcription rate, especially when the provirus integrates in transcriptionally silent region of the host genome. To ensure maximal activation of the LTR, Tat mediates nuclear translocation of NF-kappa-B by interacting with host RELA. Through its interaction with host TBP, Tat may also modulate transcription initiation. Tat can reactivate a latently infected cell by penetrating in it and transactivating its LTR promoter. In the cytoplasm, Tat is thought to act as a translational activator of HIV-1 mRNAs. Extracellular circulating Tat can be endocytosed by surrounding uninfected cells via the binding to several surface receptors such as CD26, CXCR4, heparan sulfate proteoglycans (HSPG) or LDLR. Neurons are rarely infected, but they internalize Tat via their LDLR. Through its interaction with nuclear HATs, Tat is potentially able to control the acetylation-dependent cellular gene expression. Modulates the expression of many cellular genes involved in cell survival, proliferation or in coding for cytokines or cytokine receptors. Tat plays a role in T-cell and neurons apoptosis. Tat induced neurotoxicity and apoptosis probably contribute to neuroAIDS. Circulating Tat also acts as a chemokine-like and/or growth factor-like molecule that binds to specific receptors on the surface of the cells, affecting many cellular pathways. In the vascular system, Tat binds to ITGAV/ITGB3 and ITGA5/ITGB1 integrins dimers at the surface of endothelial cells and competes with bFGF for heparin-binding sites, leading to an excess of soluble bFGF. The polypeptide is Protein Tat (Human immunodeficiency virus type 1 group M subtype B (isolate YU-2) (HIV-1)).